A 186-amino-acid polypeptide reads, in one-letter code: Peptidyl-tRNA hydrolase (186 aa).

Tyr14 is a tRNA binding site. His19 (proton acceptor) is an active-site residue. TRNA is bound by residues Tyr64, Asn66, and Asn113.

Belongs to the PTH family. Monomer.

It is found in the cytoplasm. The catalysed reaction is an N-acyl-L-alpha-aminoacyl-tRNA + H2O = an N-acyl-L-amino acid + a tRNA + H(+). Its function is as follows. Hydrolyzes ribosome-free peptidyl-tRNAs (with 1 or more amino acids incorporated), which drop off the ribosome during protein synthesis, or as a result of ribosome stalling. Functionally, catalyzes the release of premature peptidyl moieties from peptidyl-tRNA molecules trapped in stalled 50S ribosomal subunits, and thus maintains levels of free tRNAs and 50S ribosomes. This Agathobacter rectalis (strain ATCC 33656 / DSM 3377 / JCM 17463 / KCTC 5835 / VPI 0990) (Eubacterium rectale) protein is Peptidyl-tRNA hydrolase.